The sequence spans 477 residues: Cysteine--tRNA ligase (477 aa).

Residue cysteine 42 coordinates Zn(2+). Positions 44-54 (ATVQGLPHIGH) match the 'HIGH' region motif. Residues cysteine 220, histidine 245, and glutamate 249 each coordinate Zn(2+). The 'KMSKS' region motif lies at 276 to 280 (KMSKS). Lysine 279 is a binding site for ATP.

Belongs to the class-I aminoacyl-tRNA synthetase family. As to quaternary structure, monomer. It depends on Zn(2+) as a cofactor.

It is found in the cytoplasm. It catalyses the reaction tRNA(Cys) + L-cysteine + ATP = L-cysteinyl-tRNA(Cys) + AMP + diphosphate. The polypeptide is Cysteine--tRNA ligase (Mycolicibacterium smegmatis (strain ATCC 700084 / mc(2)155) (Mycobacterium smegmatis)).